The sequence spans 165 residues: Large ribosomal subunit protein uL11 (165 aa).

A Phosphoserine modification is found at Ser-38. A Glycyl lysine isopeptide (Lys-Gly) (interchain with G-Cter in SUMO2) cross-link involves residue Lys-40. A Glycyl lysine isopeptide (Lys-Gly) (interchain with G-Cter in ubiquitin) cross-link involves residue Lys-48. An N6-acetyllysine modification is found at Lys-54. A Glycyl lysine isopeptide (Lys-Gly) (interchain with G-Cter in ubiquitin) cross-link involves residue Lys-83. Ser-165 is subject to Phosphoserine.

It belongs to the universal ribosomal protein uL11 family. In terms of assembly, component of the large ribosomal subunit. Mature ribosomes consist of a small (40S) and a large (60S) subunit. The 40S subunit contains about 33 different proteins and 1 molecule of RNA (18S). The 60S subunit contains about 49 different proteins and 3 molecules of RNA (28S, 5.8S and 5S). In terms of processing, ubiquitinated at Lys-48 and Lys-83 by RNF14 and RNF25 in response to ribosome collisions (ribosome stalling).

The protein resides in the cytoplasm. Component of the large ribosomal subunit. The ribosome is a large ribonucleoprotein complex responsible for the synthesis of proteins in the cell. Binds directly to 26S ribosomal RNA. The polypeptide is Large ribosomal subunit protein uL11 (RPL12) (Chinchilla lanigera (Long-tailed chinchilla)).